A 180-amino-acid chain; its full sequence is Trafficking protein particle complex subunit 3 (180 aa).

C68 carries S-palmitoyl cysteine lipidation.

The protein belongs to the TRAPP small subunits family. BET3 subfamily. In terms of assembly, homodimer. Component of the multisubunit transport protein particle (TRAPP) complex, which includes at least TRAPPC2, TRAPPC2L, TRAPPC3, TRAPPC3L, TRAPPC4, TRAPPC5, TRAPPC8, TRAPPC9, TRAPPC10, TRAPPC11 and TRAPPC12. Heterodimer with TRAPPC6A. The heterodimer TRAPPC3-TRAPPC6A interacts with TRAPPC2L. Heterodimer with TRAPPC6b. The heterodimer TRAPPC6B-TRAPPC3 interacts with TRAPPC1 likely providing a core for TRAPP complex formation. Widely expressed. Expressed in lung, heart, liver, spleen, brain and kidney.

The protein localises to the golgi apparatus. Its subcellular location is the cis-Golgi network. It localises to the endoplasmic reticulum. In terms of biological role, may play a role in vesicular transport from endoplasmic reticulum to Golgi. The chain is Trafficking protein particle complex subunit 3 from Mus musculus (Mouse).